Here is a 962-residue protein sequence, read N- to C-terminus: MSETNPAAASEVAAPHRYTAAVAAEIEARWQDFWDAEGTYEAPNPTGDLAGGPALVAKPKKFVMDMFPYPSGAGLHVGHPLGYIATDVFARFQRMTGHNVLHTLGFDAFGLPAEQYAVQTGTHPRVSTEANIENMKVQLRRLGLGHDKRRSFATIDPDYYKWTQWIFLQIFNSWYDEEANKARPIAELVAQFESGERAVPRADGATRAWRELTAAERADVLGEYRLAYASEAPVNWSPGLGTVLANEEVTADGRSERGNFPVFKAKLRQWNMRITAYADRLLDDLDALDWPEAIKLQQRNWIGRSEGARVDFPIDGEAVTVFTTRPDTLFGATYMVLAPEHPLVEKFTPAAWPEGTHDVWTGGHATPAEAVAAYRAQAASKSDVERQAEAKDKTGVFTGAYATNPVSGEQVPVFIADYVLMGYGTGAIMAVPAHDTRDFAFARAFELSMRCVVEPSDDRGTDPSTWDDAFASYDAKIVNSSSGEISLDGLGVVEAKARITEWLERKGLGEGTVNFRLRDWLFSRQRYWGEPFPIVYDEDGIAHALPESMLPLELPEVEDYSPRTFDPDDANTSPETPLSRNEDWVNVTLDLGDGRGPQKYRRETNTMPNWAGSCWYELRYLDPHNDQKLVDPAIEQYWMGPREGQPTGGVDLYVGGAEHAVLHLLYARFWSKVLFDLGHISSAEPFHKLFNQGMIQAYVYRDSRGIAVPAAEVEERDGAYYYQGEKVSRLLGKMGKSLKNAVTPDEICAEYGADTLRLYEMAMGPLDVSRPWDTRAVVGQFRLLQRLWRNVVDEATGEVTVVDAEPDEETLRALHKAIDGVRQDLEGMRFNTAIAKVTELNNQLTKAGGPVPRTVAESLVLLVAPLAPHIAEELWRKLGHNDSVVHQDFPVADPAYVVDEAVTCVVQIKGKVKARLEVSPAISEEELEKVALADEKVVAALGGAGIRKVIVRAPKLVNIVTA.

The short motif at 68 to 79 (PYPSGAGLHVGH) is the 'HIGH' region element. The interval 559 to 582 (DYSPRTFDPDDANTSPETPLSRNE) is disordered. Residues 570–579 (ANTSPETPLS) show a composition bias toward polar residues. The 'KMSKS' region signature appears at 733–737 (KMGKS). An ATP-binding site is contributed by Lys736.

This sequence belongs to the class-I aminoacyl-tRNA synthetase family.

The protein localises to the cytoplasm. It catalyses the reaction tRNA(Leu) + L-leucine + ATP = L-leucyl-tRNA(Leu) + AMP + diphosphate. In Streptomyces avermitilis (strain ATCC 31267 / DSM 46492 / JCM 5070 / NBRC 14893 / NCIMB 12804 / NRRL 8165 / MA-4680), this protein is Leucine--tRNA ligase.